A 60-amino-acid chain; its full sequence is MSNLLKSALEKERRHYSEKLYQIGVYNKEVMNKMTISELRKEYAYFFRSITNHKNYPYTR.

The polypeptide is Stress response protein YkoL (ykoL) (Bacillus subtilis (strain 168)).